We begin with the raw amino-acid sequence, 81 residues long: Short neurotoxin 1 (81 aa).

The N-terminal stretch at 1 to 21 is a signal peptide; it reads MKTLLLSPVVVTIVCLDLGYT. Cystine bridges form between Cys-24-Cys-43, Cys-38-Cys-60, Cys-62-Cys-73, and Cys-74-Cys-79.

The protein belongs to the three-finger toxin family. Short-chain subfamily. Type I alpha-neurotoxin sub-subfamily. In terms of tissue distribution, expressed by the venom gland.

Its subcellular location is the secreted. In terms of biological role, binds to muscle nicotinic acetylcholine receptor (nAChR) and inhibit acetylcholine from binding to the receptor, thereby impairing neuromuscular transmission. The polypeptide is Short neurotoxin 1 (Hydrophis peronii (Spiny-headed seasnake)).